Here is a 304-residue protein sequence, read N- to C-terminus: MVAIIYSAEFLRHETGPTHPECPARLTAIATALRKMPGANYLHWQKPSPVTWNLDPYILRCHSQEYLNKLAKLAELGGGSLDADTPVSPQSYDVARLAVRAWLDGVDHVLNQREAVFVLARPPGHHAIRNTGMGFCLLNNVAIAAHYALTRPGVERVAILDWDVHHGNGTEALVDHNPRIFYCSLHQFPCYPGTGAAGDRGQHDNVLNIPLKPGGDGKVYREAFEHKVLPFLRQVKPDLLLVSAGYDANHSDPLAYMNLIPEDYGMMTHYLMEISPYPVLGLEGGYHLPSLAKSVVETLKPLLF.

This sequence belongs to the histone deacetylase family.

Its function is as follows. Putative deacetylase. This is an uncharacterized protein from Synechocystis sp. (strain ATCC 27184 / PCC 6803 / Kazusa).